The chain runs to 204 residues: B9 domain-containing protein 1 (204 aa).

Positions 9-127 constitute a C2 B9-type domain; sequence FLLMVNGQVE…TIPMFVPEST (119 aa). Positions 182-204 are disordered; it reads GYDTGPSDTQGVLGPSPPQSFPQ.

The protein belongs to the B9D family. Part of the tectonic-like complex (also named B9 complex).

It is found in the cytoplasm. The protein localises to the cytoskeleton. Its subcellular location is the cilium basal body. It localises to the cilium axoneme. In terms of biological role, component of the tectonic-like complex, a complex localized at the transition zone of primary cilia and acting as a barrier that prevents diffusion of transmembrane proteins between the cilia and plasma membranes. Required for ciliogenesis and sonic hedgehog/SHH signaling. The sequence is that of B9 domain-containing protein 1 (B9D1) from Homo sapiens (Human).